The chain runs to 1056 residues: Kinesin-like protein KIN-5A (1056 aa).

The tract at residues 1 to 44 is disordered; sequence MDRRIGLTSPSPKSTEKSGRDLRSGGDANGGANTNSNSIPRGDK. Residues 14–24 are compositionally biased toward basic and acidic residues; sequence STEKSGRDLRS. The Kinesin motor domain occupies 49–395; sequence NVQVILRCRP…LDYAHRAKNI (347 aa). An ATP-binding site is contributed by 135 to 142; the sequence is GQTGTGKT. The stretch at 443 to 525 forms a coiled coil; the sequence is QEEAEKKAMT…STIKEKEYVI (83 aa).

This sequence belongs to the TRAFAC class myosin-kinesin ATPase superfamily. Kinesin family. KIN-5/BimC subfamily.

It is found in the cytoplasm. The protein resides in the cytoskeleton. Its subcellular location is the spindle. Functionally, responsible for microtubule translocation. May be important for the organization of phragmoplast-specific arrays of microtubules. Plays an essential role in stabilizing the mitotic spindle. Required during mitotic cytokinesis. This chain is Kinesin-like protein KIN-5A, found in Oryza sativa subsp. japonica (Rice).